Consider the following 1918-residue polypeptide: NFX1-type zinc finger-containing protein 1 (1918 aa).

Residues 1 to 12 are compositionally biased toward basic and acidic residues; sequence MEERRPHLDARP. Disordered regions lie at residues 1–58 and 75–140; these read MEER…RANN and RNPH…QPQQ. Residues 30–42 are compositionally biased toward low complexity; the sequence is RARNQANNPPANA. Positions 82 to 105 are enriched in basic and acidic residues; sequence RNQEGHASDEARDQRHDQENDTRW. The segment covering 120 to 129 has biased composition (polar residues); that stretch reads SNDNFQQWRT. Residues 286–313 adopt a coiled-coil conformation; that stretch reads DIEEETEKNLEKVQTIIEHLQEKRREGT. Disordered stretches follow at residues 796–819 and 876–896; these read SVSPAGPENTAQAEGDEEEEGEEE and TAAGQEQATGEWQTQRNQKKK. A compositionally biased stretch (acidic residues) spans 809–819; it reads EGDEEEEGEEE. Residues 877–887 show a composition bias toward polar residues; that stretch reads AAGQEQATGEW. Residues 886–967 are a coiled coil; it reads EWQTQRNQKK…TSAERMAELR (82 aa). 6 consecutive NF-X1-type zinc fingers follow at residues 1298-1320, 1330-1346, 1382-1400, 1441-1463, 1471-1488, and 1546-1564; these read CGHVCTRACHPYDSSHKEFQCMK, GHRCPLVCFQECQPCQV, CGHRCSHPCGEDCVQLCSE, CGHPCPGSCHSCFEGRFHERCQQ, CSHKCQEPCIGECPPCQR, and CGHPCIGLCGEPCPKKCRI. A coiled-coil region spans residues 1741–1820; sequence LAKKRLSFTS…EKMEALKATL (80 aa). Residues 1827 to 1898 form an RZ-type zinc finger; it reads ISEEERVQIV…LASEMDGAQH (72 aa). Zn(2+)-binding residues include cysteine 1849, histidine 1853, cysteine 1869, and cysteine 1872.

Belongs to the ZNFX1 family. In terms of assembly, interacts with MAVS. In terms of tissue distribution, widely expressed.

The protein localises to the mitochondrion outer membrane. The protein resides in the cytoplasm. It localises to the stress granule. RNA-binding protein that initiates the antiviral response and is required to restrict the replication of RNA viruses. Acts as a double-stranded RNA (dsRNA) sensor that recognizes viral RNA and then interacts with MAVS to initiate the type I interferon response. Also required for immunity against some bacteria, such as mycobacteria. This chain is NFX1-type zinc finger-containing protein 1, found in Homo sapiens (Human).